The primary structure comprises 621 residues: Probable bifunctional dTTP/UTP pyrophosphatase/methyltransferase protein (621 aa).

Residues 11-223 form an MAF-like region; sequence LHKRVVLASA…PPRPEDLRRS (213 aa). Ser-21 bears the Phosphoserine mark. Residue Asp-88 is the Proton acceptor; for pyrophosphatase activity of the active site. The residue at position 228 (Ser-228) is a Phosphoserine. Thr-234 is subject to Phosphothreonine. The tract at residues 235 to 279 is disordered; the sequence is FEDLSDVEGGGSEPTQRDAGSRDEKAEAGEAGQATAEAECHRTRE. Position 239 is a phosphoserine (Ser-239). The span at 249–262 shows a compositional bias: basic and acidic residues; sequence TQRDAGSRDEKAEA. Positions 277–621 are ASMT-like; the sequence is TRETLPPFPT…DAILATKVAP (345 aa). Residue Ser-421 is modified to Phosphoserine. S-adenosyl-L-methionine-binding positions include Asp-482, 508–510, and Arg-525; that span reads GDF.

This sequence in the N-terminal section; belongs to the Maf family. YhdE subfamily. It in the C-terminal section; belongs to the class I-like SAM-binding methyltransferase superfamily. Cation-independent O-methyltransferase family. In terms of assembly, homodimer. Requires a divalent metal cation as cofactor. As to expression, widely expressed. In adult, highly expressed in pancreas, placenta, fibroblast, thymus, prostate, testis, ovary and colon. Expressed at lower levels in spleen, small intestine and leukocytes. In fetus, expressed at high levels in the lung and kidney and at lower level in brain and liver.

The enzyme catalyses dTTP + H2O = dTMP + diphosphate + H(+). It catalyses the reaction UTP + H2O = UMP + diphosphate + H(+). It carries out the reaction CTP + H2O = CMP + diphosphate + H(+). The catalysed reaction is psi-UTP + H2O = psi-UMP + diphosphate + H(+). The enzyme catalyses 5-methyl-UTP + H2O = 5-methyl-UMP + diphosphate + H(+). It catalyses the reaction 5-methyl-CTP + H2O = 5-methyl-CMP + diphosphate + H(+). Its function is as follows. Nucleoside triphosphate pyrophosphatase that hydrolyzes dTTP and UTP. Can also hydrolyze CTP and the modified nucleotides pseudo-UTP, 5-methyl-UTP (m(5)UTP) and 5-methyl-CTP (m(5)CTP). Has weak activity with dCTP, 8-oxo-GTP and N(4)-methyl-dCTP. May have a dual role in cell division arrest and in preventing the incorporation of modified nucleotides into cellular nucleic acids. In addition, the presence of the putative catalytic domain of S-adenosyl-L-methionine binding in the C-terminal region argues for a methyltransferase activity. This Homo sapiens (Human) protein is Probable bifunctional dTTP/UTP pyrophosphatase/methyltransferase protein (ASMTL).